Reading from the N-terminus, the 5571-residue chain is Polyketide synthase GfsB (5571 aa).

Residues 1-27 are disordered; it reads MSVPPPGATPSRTSRTKGLKDRPRMEN. The span at 18–27 shows a compositional bias: basic and acidic residues; it reads GLKDRPRMEN. In terms of domain architecture, Ketosynthase family 3 (KS3) 1 spans 57–483; that stretch reads QEPVAIIGMS…GTNAHVIIEQ (427 aa). Module regions lie at residues 57-2148, 2167-3728, and 3746-5485; these read QEPV…RDTL, DEPL…GSQV, and DEPV…HTHL. Active-site for beta-ketoacyl synthase 1 activity residues include Cys-230, His-365, and His-405. The segment at 485–518 is disordered; that stretch reads PAIEGTGLGDDAPPTAEHPEERTPADGGPAPQPV. The 316-residue stretch at 611–926 folds into the Malonyl-CoA:ACP transacylase (MAT) 1 domain; sequence FVFPGQGSQW…LRSLAEAYAH (316 aa). The interval 976–1109 is N-terminal hotdog fold 1; that stretch reads HPLLAAATSL…GYLAVGAHEP (134 aa). Positions 976–1264 constitute a PKS/mFAS DH 1 domain; it reads HPLLAAATSL…LRPLATNQAP (289 aa). The Proton acceptor; for dehydratase activity 1 role is filled by His-1008. Positions 1122-1264 are C-terminal hotdog fold 1; it reads ATPLDVTDLY…LRPLATNQAP (143 aa). The active-site Proton donor; for dehydratase activity 1 is the Asp-1183. The Enoyl reductase (ER) domain maps to 1478–1777; sequence GTLDHLTLIP…QARHIGKIVL (300 aa). Positions 1787 to 1966 constitute a Ketoreductase (KR) 1 domain; sequence GTVLVTGATG…TSLAWGLWEE (180 aa). In terms of domain architecture, Carrier 1 spans 2073-2148; sequence RIVNDLVRDH…ELAAHLRDTL (76 aa). Ser-2108 is modified (O-(pantetheine 4'-phosphoryl)serine). A Ketosynthase family 3 (KS3) 2 domain is found at 2167 to 2593; that stretch reads DEPLAVVAMS…GTNAHVILEQ (427 aa). Catalysis depends on for beta-ketoacyl synthase 2 activity residues Cys-2340, His-2475, and His-2515. The Malonyl-CoA:ACP transacylase (MAT) 2 domain maps to 2710–3016; sequence VFSGQGSQRP…AAVALQRGNR (307 aa). The 179-residue stretch at 3373–3551 folds into the Ketoreductase (KR) 2 domain; the sequence is GTVLVTGGTG…VSVAWGPWAE (179 aa). Positions 3653–3728 constitute a Carrier 2 domain; sequence TALLDLVRGQ…ALAEYVGSQV (76 aa). O-(pantetheine 4'-phosphoryl)serine is present on Ser-3688. The Ketosynthase family 3 (KS3) 3 domain maps to 3746 to 4172; sequence DEPVAIIGMS…GTNAHVILEQ (427 aa). Residues Cys-3919, His-4054, and His-4094 each act as for beta-ketoacyl synthase 3 activity in the active site. In terms of domain architecture, Malonyl-CoA:ACP transacylase (MAT) 3 spans 4279-4601; that stretch reads FLFSGQGSQR…ATAHVNGVQP (323 aa). The N-terminal hotdog fold 2 stretch occupies residues 4649–4774; that stretch reads HPLLAGVVDL…GALTVAEAVD (126 aa). The region spanning 4649-4931 is the PKS/mFAS DH 2 domain; sequence HPLLAGVVDL…TRPIAAGQLA (283 aa). The active-site Proton acceptor; for dehydratase activity 2 is the His-4681. The segment at 4787–4931 is C-terminal hotdog fold 2; the sequence is AIEVELDDPY…TRPIAAGQLA (145 aa). Asp-4848 (proton donor; for dehydratase activity 2) is an active-site residue. The 173-residue stretch at 5134–5306 folds into the Ketoreductase (KR) 3 domain; the sequence is LLVTGASGVL…TSLSWGLWAE (173 aa). The Carrier 3 domain maps to 5410–5485; sequence RMVLDLVRDR…ALARYLHTHL (76 aa). Ser-5445 carries the post-translational modification O-(pantetheine 4'-phosphoryl)serine.

Pantetheine 4'-phosphate serves as cofactor.

It functions in the pathway antibiotic biosynthesis. Functionally, second protein in the synthesis of the 16-membered macrolide antibiotics FD-891 and FD-892. Composed of 3 modules. Modifies the product of GfsA by multiple rounds of addition of malonyl-CoA or methylmalonyl-CoA and other modifications to help generate the final products. This is Polyketide synthase GfsB from Streptomyces halstedii.